A 240-amino-acid polypeptide reads, in one-letter code: Uridylate kinase (240 aa).

An ATP-binding site is contributed by 13 to 16; the sequence is KASG. The interval 21–26 is involved in allosteric activation by GTP; it reads GAQGFG. UMP is bound at residue G55. ATP is bound by residues G56 and R60. Residues D75 and 136–143 each bind UMP; that span reads TGNPFFTT. The ATP site is built by T163, Q164, Y169, and D172.

Belongs to the UMP kinase family. Homohexamer.

The protein resides in the cytoplasm. The enzyme catalyses UMP + ATP = UDP + ADP. The protein operates within pyrimidine metabolism; CTP biosynthesis via de novo pathway; UDP from UMP (UMPK route): step 1/1. Allosterically activated by GTP. Inhibited by UTP. In terms of biological role, catalyzes the reversible phosphorylation of UMP to UDP. This chain is Uridylate kinase, found in Rhizobium etli (strain ATCC 51251 / DSM 11541 / JCM 21823 / NBRC 15573 / CFN 42).